Here is a 113-residue protein sequence, read N- to C-terminus: Large ribosomal subunit protein bL17 (113 aa).

It belongs to the bacterial ribosomal protein bL17 family. Part of the 50S ribosomal subunit. Contacts protein L32.

The polypeptide is Large ribosomal subunit protein bL17 (Clostridium tetani (strain Massachusetts / E88)).